Reading from the N-terminus, the 316-residue chain is Ribosomal protein L11 methyltransferase (316 aa).

S-adenosyl-L-methionine contacts are provided by threonine 162, glycine 183, aspartate 205, and asparagine 248.

The protein belongs to the methyltransferase superfamily. PrmA family.

It is found in the cytoplasm. It carries out the reaction L-lysyl-[protein] + 3 S-adenosyl-L-methionine = N(6),N(6),N(6)-trimethyl-L-lysyl-[protein] + 3 S-adenosyl-L-homocysteine + 3 H(+). Methylates ribosomal protein L11. The protein is Ribosomal protein L11 methyltransferase of Levilactobacillus brevis (strain ATCC 367 / BCRC 12310 / CIP 105137 / JCM 1170 / LMG 11437 / NCIMB 947 / NCTC 947) (Lactobacillus brevis).